A 749-amino-acid polypeptide reads, in one-letter code: Putative Xaa-Pro aminopeptidase FRA1 (749 aa).

The tract at residues 1–33 is disordered; that stretch reads MTSKPSTSDGRAHSISHVPGTHMRGTSASHSPR. Residues serine 69, serine 92, and serine 95 each carry the phosphoserine modification. Residues aspartate 551, aspartate 562, glutamate 660, and glutamate 674 each coordinate Mn(2+).

Belongs to the peptidase M24B family. As to quaternary structure, homodimer. Interacts with FRA2. It depends on Mn(2+) as a cofactor.

The protein localises to the cytoplasm. It catalyses the reaction Release of any N-terminal amino acid, including proline, that is linked to proline, even from a dipeptide or tripeptide.. Functionally, involved in the regulation of the iron regulon in responss to decreased mitochondrial iron-sulfur cluster synthesis. The protein is Putative Xaa-Pro aminopeptidase FRA1 (FRA1) of Saccharomyces cerevisiae (strain ATCC 204508 / S288c) (Baker's yeast).